The following is a 120-amino-acid chain: Chaperonin GroEL (120 aa).

An ATP-binding site is contributed by 23-27; sequence DGTTT.

The protein belongs to the chaperonin (HSP60) family. In terms of assembly, forms a cylinder of 14 subunits composed of two heptameric rings stacked back-to-back. Interacts with the co-chaperonin GroES.

It localises to the cytoplasm. The enzyme catalyses ATP + H2O + a folded polypeptide = ADP + phosphate + an unfolded polypeptide.. Functionally, together with its co-chaperonin GroES, plays an essential role in assisting protein folding. The GroEL-GroES system forms a nano-cage that allows encapsulation of the non-native substrate proteins and provides a physical environment optimized to promote and accelerate protein folding. The polypeptide is Chaperonin GroEL (Mycolicibacterium vaccae (Mycobacterium vaccae)).